Reading from the N-terminus, the 2303-residue chain is Adenomatous polyposis coli protein 2 (2303 aa).

Positions 8–59 form a coiled coil; sequence YEQLVRQVEALKAENSHLRQELRDNSSHLSKLETETSGMKEVLKHLQGKLEQ. Disordered stretches follow at residues 94–120 and 247–270; these read PTLGPEPAARTPEGSPVHGSGPSKDSF and VPVDEDPETEVPTHPEDGTPQPGN. 6 ARM repeats span residues 302–341, 479–518, 522–562, 566–609, 615–654, and 657–696; these read PESCVAMRRSGCLPLLLQILHGTEAAAGGRAGAPGAPGAK, ANKATLCARRGCMEAIVAQLASDSEELHQVVSSILRNLSW, INSK…NLSA, ENKA…NVSS, EDYRQVLRDHNCLQTLLQHLTSHSLTIVSNACGTLWNLSA, and ARDQELLWDLGAVGMLRNLVHSKHKMIAMGSAAALRNLLA. Disordered regions lie at residues 744–764 and 816–835; these read KQGPPAAEAATKKPLPPLRHL and LARTPPTRRGGKEAEKDTSG. The segment covering 825–834 has biased composition (basic and acidic residues); sequence GGKEAEKDTS. Residues 840 to 864 are a coiled coil; it reads AAKAKAKLALAVARIDQLVEDISAL. Disordered regions lie at residues 867–908, 953–986, 1069–1152, and 1173–1228; these read SSDD…AGSR, RREDPRCGQPRPSRLDLDLPGCQAEPPAREATSA, RCSS…ENYV, and SPSI…EATQ. Over residues 869–878 the composition is skewed to low complexity; sequence DDSFSLSSGD. Residues 1058–1077 form repeat 1; it reads LAAQEGPLSLSRCSSLSSLS. A 5 X 20 AA approximate repeat of F-X-V-E-X-T-P-X-C-F-S-R-X-S-S-L-S-S-L-S region spans residues 1058–1587; it reads LAAQEGPLSL…SLSSSASSLS (530 aa). Residues 1058-1587 are interaction with CTNNB1; sequence LAAQEGPLSL…SLSSSASSLS (530 aa). Positions 1069–1084 are enriched in low complexity; sequence RCSSLSSLSSAGRPGP. A compositionally biased stretch (acidic residues) spans 1088-1101; sequence GDLDDSDSSLEGLE. The segment covering 1143–1152 has biased composition (polar residues); the sequence is TPSSSSENYV. Repeat 2 spans residues 1150–1169; the sequence is NYVQETPLVLSRCSSVSSLG. Positions 1173–1186 are enriched in low complexity; it reads SPSIASSIPSEPCS. Over residues 1202–1212 the composition is skewed to polar residues; the sequence is PGQTMPPSRSK. Residues 1263 to 1282 form repeat 3; sequence FTVEKPDENFSCASSLSALA. 5 disordered regions span residues 1307–1335, 1382–1497, 1510–1684, 1724–2031, and 2046–2232; these read GAGGAGLHFAGHRRREEGPAPTGSRPRGA, PAQE…QSLC, YGND…LDSV, LSVG…RGRP, and LRAA…DVDG. Polar residues predominate over residues 1390 to 1410; the sequence is TDSAEGTPVNFSSAASLSDET. Copy 4 of the repeat occupies 1391 to 1410; it reads DSAEGTPVNFSSAASLSDET. 2 stretches are compositionally biased toward basic and acidic residues: residues 1477 to 1489 and 1537 to 1548; these read ADKDGSKPGRTRG and FTRERPQGRKEA. Copy 5 of the repeat occupies 1568-1587; sequence LIADETPPCYSLSSSASSLS. A compositionally biased stretch (low complexity) spans 1578 to 1589; that stretch reads SLSSSASSLSEP. Residues serine 1585 and serine 1587 each carry the phosphoserine modification. A compositionally biased stretch (basic residues) spans 1638–1654; it reads PRRRPPVSGLRRRKPRA. 2 stretches are compositionally biased toward basic and acidic residues: residues 1655-1671 and 1739-1755; these read TRLDERPAEGSRERGEE and RQAEGEMGSARRPEKRG. Low complexity predominate over residues 1819–1830; the sequence is APPCLAQPAAPA. The interval 1821–1900 is required for localization to microtubules and function in microtubule stabilization; sequence PCLAQPAAPA…PPVTQAAGAL (80 aa). Over residues 1851–1860 the composition is skewed to polar residues; sequence ELATLSQPPR. Low complexity-rich tracts occupy residues 1868-1886, 1971-1984, 2011-2026, 2049-2062, and 2113-2123; these read LAKTPSSSSSQTSPASQPL, GLVRVASALSSGSE, LSSAESAASAPQGASP, APRQGPAPARQRPP, and GAVPAAPASAD. An interaction with MAPRE1 and MAPRE3 region spans residues 2067-2144; the sequence is SPGERPARRT…PLPRVAAPGT (78 aa). The span at 2124 to 2135 shows a compositional bias: basic and acidic residues; sequence AARRSSDGEPRP. The span at 2200–2209 shows a compositional bias: polar residues; it reads KTNSSTSPSL.

This sequence belongs to the adenomatous polyposis coli (APC) family. Interacts with PSRC1. Interacts with APC. Interacts with CTNNB1. Interacts with MAPRE1 and MAPRE3. Interacts with TP53BP. Interacts possibly with AXIN2. As to expression, widely expressed (at protein level). Specifically expressed in the CNS.

Its subcellular location is the cytoplasm. It localises to the cytoskeleton. The protein localises to the golgi apparatus. The protein resides in the perinuclear region. Its function is as follows. Stabilizes microtubules and may regulate actin fiber dynamics through the activation of Rho family GTPases. May also function in Wnt signaling by promoting the rapid degradation of CTNNB1. The protein is Adenomatous polyposis coli protein 2 of Homo sapiens (Human).